A 76-amino-acid polypeptide reads, in one-letter code: Acyl carrier protein (76 aa).

The Carrier domain maps to 1–75; that stretch reads MVLEKIKTLM…DVVLYIEKNL (75 aa). Ser35 bears the O-(pantetheine 4'-phosphoryl)serine mark.

The protein belongs to the acyl carrier protein (ACP) family. 4'-phosphopantetheine is transferred from CoA to a specific serine of apo-ACP by AcpS. This modification is essential for activity because fatty acids are bound in thioester linkage to the sulfhydryl of the prosthetic group.

It localises to the cytoplasm. It functions in the pathway lipid metabolism; fatty acid biosynthesis. Carrier of the growing fatty acid chain in fatty acid biosynthesis. This Phytoplasma australiense protein is Acyl carrier protein.